Here is a 194-residue protein sequence, read N- to C-terminus: Lectin-C (194 aa).

Residues 1–26 (MKRSNSIAVMLVLVLSSLMLLLPVEG) form the signal peptide. Residues 27 to 44 (QGHEGHGVGEILLMGKLG) constitute a propeptide, removed in mature form. Chitin-binding type-1 domains follow at residues 45-86 (APVC…QCDY), 87-127 (NRCG…QCSY), and 128-168 (WRCG…QCDL). 12 disulfides stabilise this stretch: Cys48/Cys63, Cys57/Cys69, Cys62/Cys76, Cys80/Cys84, Cys89/Cys104, Cys98/Cys110, Cys103/Cys117, Cys121/Cys125, Cys130/Cys145, Cys139/Cys151, Cys144/Cys158, and Cys162/Cys166. A propeptide spans 171 to 194 (LLPSPLRRIIAIRKLKANLANMLS) (removed in mature form).

Homodimer. The homodimers are asymmetric; formed in a 'head-to-tail' fashion via hydrophobic interactions between aromatic residues of the carbohydrate-binding sites of each subunit.

Functionally, N-acetyl-D-glucosamine binding lectin. Almost no hemagglutinating activity towards human erythrocytes. Low mitogenic activity towards human peripheral blood lymphocytes. The polypeptide is Lectin-C (Phytolacca americana (American pokeweed)).